Here is a 776-residue protein sequence, read N- to C-terminus: Serine/threonine-protein kinase SIK1 (776 aa).

The Protein kinase domain maps to 27–278 (YDVERTLGKG…IAQIRQHRWM (252 aa)). Residues 33 to 41 (LGKGNFAVV) and K56 contribute to the ATP site. Residue D149 is the Proton acceptor of the active site. T182 carries the post-translational modification Phosphothreonine; by LKB1 and GSK3-beta. S186 bears the Phosphoserine; by autocatalysis mark. The UBA domain occupies 303 to 343 (DYNEQVLGIMQALGIDRQRTVESLQNSSYNHFAAIYYLLLE). The residue at position 322 (T322) is a Phosphothreonine; by CaMK1. 2 disordered regions span residues 350-371 (STQP…RNSD) and 449-472 (EARQ…STGR). At S577 the chain carries Phosphoserine; by PKA. Residues 586 to 612 (KAFRQQLRKNARTKGFLGLNKIKGLAR) are RK-rich region. The segment at 621 to 643 (GSRGGMSTFHTPAPSSGLQGCTA) is disordered. The segment covering 628–643 (TFHTPAPSSGLQGCTA) has biased composition (polar residues).

It belongs to the protein kinase superfamily. CAMK Ser/Thr protein kinase family. AMPK subfamily. Interacts (when phosphorylated on Thr-182 and Ser-186) with YWHAZ. Interacts with ATP1A1. The cofactor is Mg(2+). In terms of processing, phosphorylated at Thr-182 by STK11/LKB1 in complex with STE20-related adapter-alpha (STRADA) pseudo kinase and CAB39, leading to its activation. Phosphorylation at Thr-182 promotes autophosphorylation at Ser-186, which is required for sustained activity. Autophosphorylation at Ser-186 is maintained by sequential phosphorylation at Thr-182 by GSK3-beta. GSK3-beta cannot initiate phosphorylation at Thr-182, it can only maintain it. Phosphorylation at Ser-577 by PKA promotes translocation to the cytoplasm. Phosphorylation at Thr-322 by CaMK1 following intracellular sodium concentration leads to activation.

It is found in the cytoplasm. It localises to the nucleus. The catalysed reaction is L-seryl-[protein] + ATP = O-phospho-L-seryl-[protein] + ADP + H(+). The enzyme catalyses L-threonyl-[protein] + ATP = O-phospho-L-threonyl-[protein] + ADP + H(+). Its activity is regulated as follows. Activated by phosphorylation on Thr-182. Also activated by phosphorylation on Thr-322 in response to increases in intracellular sodium in parallel with elevations in intracellular calcium through the reversible sodium/calcium exchanger. Functionally, serine/threonine-protein kinase involved in various processes such as cell cycle regulation, gluconeogenesis and lipogenesis regulation, muscle growth and differentiation and tumor suppression. Phosphorylates HDAC4, HDAC5, PPME1, SREBF1, CRTC1/TORC1 and CRTC2/TORC2. Acts as a tumor suppressor and plays a key role in p53/TP53-dependent anoikis, a type of apoptosis triggered by cell detachment: required for phosphorylation of p53/TP53 in response to loss of adhesion and is able to suppress metastasis. Part of a sodium-sensing signaling network, probably by mediating phosphorylation of PPME1: following increases in intracellular sodium, SIK1 is activated by CaMK1 and phosphorylates PPME1 subunit of protein phosphatase 2A (PP2A), leading to dephosphorylation of sodium/potassium-transporting ATPase ATP1A1 and subsequent increase activity of ATP1A1. Acts as a regulator of muscle cells by phosphorylating and inhibiting class II histone deacetylases HDAC4 and HDAC5, leading to promote expression of MEF2 target genes in myocytes. Also required during cardiomyogenesis by regulating the exit of cardiomyoblasts from the cell cycle via down-regulation of CDKN1C/p57Kip2. Acts as a regulator of hepatic gluconeogenesis by phosphorylating and repressing the CREB-specific coactivators CRTC1/TORC1 and CRTC2/TORC2, leading to inhibit CREB activity. Also regulates hepatic lipogenesis by phosphorylating and inhibiting SREBF1. In concert with CRTC1/TORC1, regulates the light-induced entrainment of the circadian clock by attenuating PER1 induction; represses CREB-mediated transcription of PER1 by phosphorylating and deactivating CRTC1/TORC1. This Rattus norvegicus (Rat) protein is Serine/threonine-protein kinase SIK1 (Sik1).